The chain runs to 142 residues: ATP synthase epsilon chain (142 aa).

It belongs to the ATPase epsilon chain family. As to quaternary structure, F-type ATPases have 2 components, CF(1) - the catalytic core - and CF(0) - the membrane proton channel. CF(1) has five subunits: alpha(3), beta(3), gamma(1), delta(1), epsilon(1). CF(0) has three main subunits: a, b and c.

Its subcellular location is the cell inner membrane. Its function is as follows. Produces ATP from ADP in the presence of a proton gradient across the membrane. This chain is ATP synthase epsilon chain, found in Shewanella baltica (strain OS185).